A 72-amino-acid polypeptide reads, in one-letter code: Conotoxin VnMKLT2-011 (72 aa).

The signal sequence occupies residues M1–A23. Positions E24–R42 are excised as a propeptide. Cystine bridges form between C44/C57, C51/C62, and C56/C71.

This sequence belongs to the conotoxin O1 superfamily. In terms of tissue distribution, expressed by the venom duct.

It localises to the secreted. The protein is Conotoxin VnMKLT2-011 of Conus ventricosus (Mediterranean cone).